A 537-amino-acid polypeptide reads, in one-letter code: Apoptosis inhibitor 5-like protein API5 (537 aa).

The segment at 9 to 363 (AEVERLYELG…TTNSLCGYKI (355 aa)) is ARM-like and Heat-like helical repeats. The tract at residues 465 to 537 (WMEQPKKPAP…GGRGRGWGYR (73 aa)) is disordered. Residues 474-492 (PTTTGGKRSQPATNGNTPA) are compositionally biased toward polar residues.

The protein belongs to the API5 family. As to quaternary structure, interacts with AIP1 and AIP2.

The protein localises to the nucleus. Putative anti-apoptotic factor involved in the regulation of tapetal programmed cell death (PCD) and degeneration during anther development. Interacts directly with the DEAD-box ATP-dependent RNA helicases AIP1 and AIP2 that form dimers and bind the promoter region of the cysteine protease CP1 involved in tapetum PCD. The polypeptide is Apoptosis inhibitor 5-like protein API5 (Oryza sativa subsp. japonica (Rice)).